We begin with the raw amino-acid sequence, 349 residues long: Insulin gene enhancer protein ISL-1 (349 aa).

2 LIM zinc-binding domains span residues 17–70 (CVGC…CKRD) and 79–133 (CAKC…RADH). A DNA-binding region (homeobox) is located at residues 181-240 (TTRVRTVLNEKQLHTLRTCYAANPRPDALMKEQLVEMTGLSPRVIRVWFQNKRCKDKKRS). Residues 312-349 (VNFSEGGPGSNSTGSEVASMSSQLPDTPNSMVASPIEA) form a disordered region. A compositionally biased stretch (polar residues) spans 321 to 343 (SNSTGSEVASMSSQLPDTPNSMV).

The protein resides in the nucleus. Its function is as follows. Acts as a transcriptional regulator. Recognizes and binds to the consensus octamer binding site 5'-ATAATTAA-3' in promoter of target genes. Plays a fundamental role in the gene regulatory network essential for retinal ganglion cell (RGC) differentiation. Binds to insulin gene enhancer sequences. Defines subclasses of motoneurons that segregate into columns in the spinal cord and select distinct axon pathways. Acts in conjunction with LHX1, LHX3 and ISL2. Binds to insulin gene enhancer sequences. Essential for heart development. This chain is Insulin gene enhancer protein ISL-1 (ISL1), found in Gallus gallus (Chicken).